The sequence spans 371 residues: 4-hydroxy-3-methylbut-2-en-1-yl diphosphate synthase (flavodoxin) (371 aa).

[4Fe-4S] cluster is bound by residues cysteine 270, cysteine 273, cysteine 305, and glutamate 312.

Belongs to the IspG family. It depends on [4Fe-4S] cluster as a cofactor.

It carries out the reaction (2E)-4-hydroxy-3-methylbut-2-enyl diphosphate + oxidized [flavodoxin] + H2O + 2 H(+) = 2-C-methyl-D-erythritol 2,4-cyclic diphosphate + reduced [flavodoxin]. It participates in isoprenoid biosynthesis; isopentenyl diphosphate biosynthesis via DXP pathway; isopentenyl diphosphate from 1-deoxy-D-xylulose 5-phosphate: step 5/6. In terms of biological role, converts 2C-methyl-D-erythritol 2,4-cyclodiphosphate (ME-2,4cPP) into 1-hydroxy-2-methyl-2-(E)-butenyl 4-diphosphate. The chain is 4-hydroxy-3-methylbut-2-en-1-yl diphosphate synthase (flavodoxin) from Shewanella frigidimarina (strain NCIMB 400).